Reading from the N-terminus, the 304-residue chain is Cell surface-binding protein OPG105 (304 aa).

An Alpha-carbonic anhydrase domain is found at 1 to 235; it reads MPQQLSPINI…NDDTQVYYSG (235 aa). Residues 1-275 are Virion surface-facing; sequence MPQQLSPINI…YQKYIEGNKT (275 aa). The helical transmembrane segment at 276-294 threads the bilayer; that stretch reads FAIIAIVFVFILTAILFFM. Over 295–304 the chain is Intravirion; it reads SQRYSREKQN.

This sequence belongs to the alpha-carbonic anhydrase family. In terms of assembly, homodimer; disulfide-linked. Apparently non-glycosylated.

Its subcellular location is the virion membrane. In terms of biological role, binds to chondroitin sulfate on the cell surface to provide virion attachment to target cell. This is Cell surface-binding protein OPG105 (OPG105) from Vaccinia virus (strain Ankara) (VACV).